Consider the following 396-residue polypeptide: MMLIGEALIGEAPELAHVDLMIGDKEGPVGQAFATGMTQLSAGHTPVLSVIRPNLPTKPSTLIVPKVTVKGMDQASQIFGPAQAAVSKAVADAVEEGLIPKEKAEDLVIIASVFIHPQAVDYNRIYRYNYGATKLALKRALDGFPDIDTVLHEKDRAAHAVMGFKISKLWDAPYLQVALDNPNLPVILNIIKQLPKSDHLILEAGTPLIKRYGVDVISKIREVRPDAFIVADLKTLDTGNLEARMVADATADAIVVSALAPIATLNKVIEEAHKTGIYAVMDTLNTPDPVAVLEQLDVLPDVVELHRAIDIEGTAHAWGSIEGIKALAVKRSSKVLVAVAGGVRVDTISDALGAGADILVVGRAITNSKDVRQAADRFIEGLNKPEIDQFRIMTDF.

Residues 1-161 (MMLIGEALIG…HEKDRAAHAV (161 aa)) are formaldehyde-activating enzyme. Histidine 17 functions as the Proton donor in the catalytic mechanism. The substrate site is built by aspartate 19, leucine 48, lysine 66, threonine 68, and glutamine 83. The segment at 162–396 (MGFKISKLWD…IDQFRIMTDF (235 aa)) is 3-hexulose-6-phosphate synthase.

In the N-terminal section; belongs to the formaldehyde-activating enzyme family. This sequence in the C-terminal section; belongs to the HPS/KGPDC family. HPS subfamily.

The catalysed reaction is 5,6,7,8-tetrahydromethanopterin + formaldehyde = 5,10-methylenetetrahydromethanopterin + H2O. The enzyme catalyses D-ribulose 5-phosphate + formaldehyde = D-arabino-hex-3-ulose 6-phosphate. Its pathway is carbohydrate biosynthesis; D-ribose 5-phosphate biosynthesis. In terms of biological role, catalyzes the condensation of formaldehyde with tetrahydromethanopterin (H(4)MPT) to 5,10-methylenetetrahydromethanopterin. Functionally, catalyzes the reversible formation of ribulose-5-phosphate and formaldehyde from 3-hexulose-6-phosphate. The polypeptide is Bifunctional enzyme Fae/Hps (Methanococcoides burtonii (strain DSM 6242 / NBRC 107633 / OCM 468 / ACE-M)).